We begin with the raw amino-acid sequence, 387 residues long: Chorismate synthase (387 aa).

Residues Arg42 and Arg48 each coordinate NADP(+). Residues 131–133 (RSS), 251–252 (QA), Gly295, 310–314 (KPIPT), and Arg336 each bind FMN.

This sequence belongs to the chorismate synthase family. Homotetramer. FMNH2 is required as a cofactor.

The catalysed reaction is 5-O-(1-carboxyvinyl)-3-phosphoshikimate = chorismate + phosphate. Its pathway is metabolic intermediate biosynthesis; chorismate biosynthesis; chorismate from D-erythrose 4-phosphate and phosphoenolpyruvate: step 7/7. Its function is as follows. Catalyzes the anti-1,4-elimination of the C-3 phosphate and the C-6 proR hydrogen from 5-enolpyruvylshikimate-3-phosphate (EPSP) to yield chorismate, which is the branch point compound that serves as the starting substrate for the three terminal pathways of aromatic amino acid biosynthesis. This reaction introduces a second double bond into the aromatic ring system. This Syntrophotalea carbinolica (strain DSM 2380 / NBRC 103641 / GraBd1) (Pelobacter carbinolicus) protein is Chorismate synthase.